Here is a 514-residue protein sequence, read N- to C-terminus: Histidine ammonia-lyase (514 aa).

Positions 146–148 (ASG) form a cross-link, 5-imidazolinone (Ala-Gly). The residue at position 147 (S147) is a 2,3-didehydroalanine (Ser).

Belongs to the PAL/histidase family. Contains an active site 4-methylidene-imidazol-5-one (MIO), which is formed autocatalytically by cyclization and dehydration of residues Ala-Ser-Gly.

The protein localises to the cytoplasm. The enzyme catalyses L-histidine = trans-urocanate + NH4(+). The protein operates within amino-acid degradation; L-histidine degradation into L-glutamate; N-formimidoyl-L-glutamate from L-histidine: step 1/3. The protein is Histidine ammonia-lyase of Clostridium tetani (strain Massachusetts / E88).